We begin with the raw amino-acid sequence, 204 residues long: Paraneoplastic antigen-like protein 8C (204 aa).

Residues 135-204 (PPATGPRELP…RRHHASDKKL (70 aa)) are disordered. Residues 182–204 (VGKRGKRKNKKNRRRHHASDKKL) are compositionally biased toward basic residues.

Belongs to the PNMA family.

The chain is Paraneoplastic antigen-like protein 8C from Homo sapiens (Human).